A 427-amino-acid chain; its full sequence is Clusterin-associated protein 1 homolog (427 aa).

Positions 202 to 307 form a coiled coil; sequence LLNNVSSDEA…LKEEEKRLMR (106 aa). Residues 300–313 are compositionally biased toward basic and acidic residues; the sequence is EEEKRLMRSGVARD. The tract at residues 300–427 is disordered; sequence EEEKRLMRSG…QILEESDNDF (128 aa). Composition is skewed to acidic residues over residues 314–332 and 363–400; these read EDSD…DIDD and SEET…DNDS.

The protein belongs to the CLUAP1 family.

It is found in the nucleus. Its subcellular location is the cell projection. It localises to the cilium. Its function is as follows. Required for cilia biogenesis and maintenance in the kidney, the lateral line organ and eye. Appears to function within the multiple intraflagellar transport complex B (IFT-B). This is Clusterin-associated protein 1 homolog (cluap1) from Danio rerio (Zebrafish).